The sequence spans 393 residues: MESFLFTSESVNEGHPDKLCDQISDAILDACLEQDPESKVACETCTKTNMVMVFGEITTKANVDYEQIVRKTCREIGFVSADVGLDADNCKVLVNIEQQSPDIAQGVHGHLTKKPEEVGAGDQGHMFGYATDETPELMPLTHVLATKLGAKLTEVRKNGTCPWLRPDGKTQVTIEYINESGAMVPVRVHTVLISTQHDETVTNDEIAADLKEHVIKPVIPEKYLDEKTIFHLNPSGRFVIGGPHGDAGLTGRKIIIDTYGGWGAHGGGAFSGKDPTKVDRSGAYIVRQAAKSIVASGLARRVIVQVSYAIGVPEPLSVFVDSYGTGKIPDKEILEIVKESFDFRPGMISINLDLKRGGNGRFLKTAAYGHFGRDDADFTWEVVKPLKSNKVQA.

A Mg(2+)-binding site is contributed by glutamate 9. Histidine 15 lines the ATP pocket. Residue glutamate 43 coordinates K(+). 2 residues coordinate L-methionine: glutamate 56 and glutamine 99. Residues 167–169, 235–238, aspartate 246, 252–253, alanine 269, lysine 273, and lysine 277 contribute to the ATP site; these read DGK, SGRF, and RK. Position 246 (aspartate 246) interacts with L-methionine. Position 277 (lysine 277) interacts with L-methionine.

The protein belongs to the AdoMet synthase family. Homotetramer. Requires Mn(2+) as cofactor. Mg(2+) serves as cofactor. Co(2+) is required as a cofactor. The cofactor is K(+). In terms of tissue distribution, detected in trichomes (at the protein level).

The protein resides in the cytoplasm. The enzyme catalyses L-methionine + ATP + H2O = S-adenosyl-L-methionine + phosphate + diphosphate. It participates in amino-acid biosynthesis; S-adenosyl-L-methionine biosynthesis; S-adenosyl-L-methionine from L-methionine: step 1/1. Functionally, catalyzes the formation of S-adenosylmethionine from methionine and ATP. The reaction comprises two steps that are both catalyzed by the same enzyme: formation of S-adenosylmethionine (AdoMet) and triphosphate, and subsequent hydrolysis of the triphosphate. The protein is S-adenosylmethionine synthase 4 (METK4) of Arabidopsis thaliana (Mouse-ear cress).